A 1062-amino-acid polypeptide reads, in one-letter code: Histone H3-lysine(4) N-trimethyltransferase ATX1 (1062 aa).

The disordered stretch occupies residues 159 to 184; that stretch reads NAFSGNKQNGSSRRKGSSSKNQDKAT. Positions 301–365 constitute a PWWP domain; sequence PGDIVWAKLA…VKQAISFIKG (65 aa). The tract at residues 401–424 is disordered; the sequence is QLQKGADSVDSDMANSTEEGNSGG. One can recognise an FYR N-terminal domain in the interval 441 to 500; the sequence is DFRHIIGDLLIINLGKVVTDSQFFKDENHIWPEGYTAMRKFTSLTDHSASALYKMEVLRD. The region spanning 504–586 is the FYR C-terminal domain; that stretch reads KTHPLFIVTA…RPSSHVSMCK (83 aa). The Phorbol-ester/DAG-type zinc-finger motif lies at 591-647; sequence RHQNQPTGYRPVRVDWKDLDKCNVCHMDEEYENNLFLQCDKCRMMVHAKCYGELEPC. The interaction with PIP5 stretch occupies residues 599–1062; it reads YRPVRVDWKD…RCDLIDWTAE (464 aa). Residues 609–660 form a PHD-type 1 zinc finger; it reads LDKCNVCHMDEEYENNLFLQCDKCRMMVHAKCYGELEPCDGALWLCNLCRPG. Residues 665 to 698 form a C2HC pre-PHD-type zinc finger; that stretch reads PPRCCLCPVVGGAMKPTTDGRWAHLACAIWIPET. The segment at 722 to 785 adopts a PHD-type 2 zinc-finger fold; the sequence is LMCTICGVSY…RMLSFCKRHR (64 aa). The SET domain maps to 898–1016; that stretch reads KRLAFGKSGI…KWEELTYDYR (119 aa). Residue histidine 908 coordinates S-adenosyl-L-methionine. Residue serine 947 is glycosylated (O-linked (GlcNAc) serine). S-adenosyl-L-methionine contacts are provided by residues tyrosine 954 and 977 to 978; that span reads NH. Positions 980, 1026, 1028, and 1033 each coordinate Zn(2+). The 17-residue stretch at 1022-1038 folds into the Post-SET domain; that stretch reads ERLSCSCGFPGCRGVVN.

It belongs to the class V-like SAM-binding methyltransferase superfamily. Histone-lysine methyltransferase family. TRX/MLL subfamily. In terms of assembly, interacts with PIP5. Interacts with WDR5A. Binds to CLF in the nucleus. Interacts with NRPB1 CTD domain, especially when NRPB1 is phosphorylated on 'Ser-5' of the heptapeptide repeat. Component of a nuclear protein complex containing at least TATA binding proteins (TBPs, e.g. TBP1 and TBP2) and ATX1. Associates with ULT1 for trimethylating 'Lys-4' on histone H3 (H3K4me3) at flower MADS box gene loci. Interacts with SEC. Interacts with A4/EF1A in the cytoplasm on the nuclear periphery. Post-translationally, activated via O-glycosylation by SEC; this modification triggers FLC locus H3K4me3 histone modification, thus preventing premature flowering. As to expression, strongly expressed in cotyledons, but weak levels in the first true leaves, except at the hydothodes. Ubiquitous with higher levels in dividing tissues, including inflorescence meristem and flower primordia. Expressed also in leaves (especially at hydathodes), in growing inflorescence stems and in the mature flowers. In terms of tissue distribution, strongly expressed in young seedlings.

It localises to the nucleus. The protein resides in the cytoplasm. The protein localises to the perinuclear region. It catalyses the reaction L-lysyl(4)-[histone H3] + 3 S-adenosyl-L-methionine = N(6),N(6),N(6)-trimethyl-L-lysyl(4)-[histone H3] + 3 S-adenosyl-L-homocysteine + 3 H(+). The catalysed reaction is L-lysyl-[protein] + 3 S-adenosyl-L-methionine = N(6),N(6),N(6)-trimethyl-L-lysyl-[protein] + 3 S-adenosyl-L-homocysteine + 3 H(+). Its function is as follows. Binds to the promoter and regulates the transcription of target genes, maintaining them in an active state; at promoters, required for TATA binding proteins (TBPs, e.g. TBP1 and TBP2) and RNA polymerase II (Pol II) recruitment, and, in a subsequent event, is recruited by a phosphorylated form of Pol II to the +300-bp region of transcribed sequences to trimethylates nucleosomes. Histone trimethyltransferase that trimethylates 'Lys-4' of histone H3 (H3K4me3); H3 'Lys-4' methylation represents a specific tag for epigenetic transcriptional activation and is required for efficient elongation of transcription but not for transcription initiation. Methylates only a limited fraction of nucleosomes of target genes (e.g. FLC, NAP, XTH33 and WRKY70). Necessary for WDR5A occupancy at WRKY70 and LTP7 genes. Required to maintain the active state of class A (AP1 and AP2), class B (PI and AP3) and class C (AG, AGAMOUS) floral homeotic genes at early stages of flower development. Together with CLF, modulates AG nucleosome methylation statement. Involved in epigenetic regulation (e.g. H3K4me3) of the floral repressors FLC, FT and SOC1 to prevent the transition from vegetative to reproductive development, independently of the photoperiod; binds the active FLC locus before flowering, but this interaction is released upon the transition to flowering. Regulates floral organ identity and flowering transition. Functions as a receptor for the lipid messenger phosphatidylinositol 5-phosphate (PI5P), which negatively regulates its transcriptional activation activity. Exhibits histone methylase activity and subsequent transcriptional regulation on WRKY70 gene, and, to a lower extent on secondary defense-response targets salicylic acid (SA)-responsive gene PR1 and jasmonic acid (JA)-responsive gene THI2.1. Involved in response to dehydration stress-response in both abscisic acid (ABA)-dependent and ABA-independent pathways; this includes specific genes (e.g. COR15A, ADH1, CBF4, RD29A, RD29B, RD26, ABF3, NCED3 and ABA3) epigenetic regulation (e.g. H3K4me3 and Pol II recruitment) to promote their transcription and influence ABA production. Implicated in stomatal closure regulation. Indirect repressor of XTH genes (XTH33). Necessary for the phosphorylation of Pol II NRPB1 (e.g. Ser5P and Ser2P) at the promoters of target genes, thus regulating both early and late stages of transcription. Controls root growth and architecture by regulating the timing of root development, stem cell niche maintenance (e.g. quiescent center (QC)), and cell patterning during primary and lateral root development. Modulates cell cycle duration, cell production, and the transition from cell proliferation in the root apical meristem (RAM) to cell elongation. In terms of biological role, trimethylates A4/EF1A post-translationally at Lys-396. Required for actin cytoskeleton organization. This chain is Histone H3-lysine(4) N-trimethyltransferase ATX1, found in Arabidopsis thaliana (Mouse-ear cress).